The chain runs to 299 residues: Probable lipid kinase YegS (299 aa).

The DAGKc domain occupies 2–133 (AEFPASLLIL…IDMAQVNKQT (132 aa)). ATP contacts are provided by residues T40, 66 to 72 (GDGTINE), and T95. Residues L215, D218, and L220 each contribute to the Mg(2+) site. E271 (proton acceptor) is an active-site residue.

It belongs to the diacylglycerol/lipid kinase family. YegS lipid kinase subfamily. It depends on Mg(2+) as a cofactor. Requires Ca(2+) as cofactor.

The protein resides in the cytoplasm. In terms of biological role, probably phosphorylates lipids; the in vivo substrate is unknown. This Escherichia coli O6:K15:H31 (strain 536 / UPEC) protein is Probable lipid kinase YegS.